Consider the following 599-residue polypeptide: Elongation factor 4 (599 aa).

The 183-residue stretch at 5–187 (NHIRNFSIIA…QIVQLVPPPE (183 aa)) folds into the tr-type G domain. Residues 17–22 (DHGKST) and 134–137 (NKMD) contribute to the GTP site.

This sequence belongs to the TRAFAC class translation factor GTPase superfamily. Classic translation factor GTPase family. LepA subfamily.

The protein localises to the cell inner membrane. The enzyme catalyses GTP + H2O = GDP + phosphate + H(+). Required for accurate and efficient protein synthesis under certain stress conditions. May act as a fidelity factor of the translation reaction, by catalyzing a one-codon backward translocation of tRNAs on improperly translocated ribosomes. Back-translocation proceeds from a post-translocation (POST) complex to a pre-translocation (PRE) complex, thus giving elongation factor G a second chance to translocate the tRNAs correctly. Binds to ribosomes in a GTP-dependent manner. This is Elongation factor 4 from Hahella chejuensis (strain KCTC 2396).